The sequence spans 293 residues: Mycothiol S-conjugate amidase (293 aa).

Zn(2+) is bound by residues histidine 13, aspartate 16, and histidine 144.

Belongs to the MshB deacetylase family. Mca subfamily. Monomer. It depends on Zn(2+) as a cofactor.

The enzyme catalyses mycothiol S-conjugate + H2O = an N-acetyl-L-cysteine-S-conjugate + 1D-myo-inositol 2-amino-2-deoxy-alpha-D-glucopyranoside. Functionally, a mycothiol (MSH, N-acetylcysteinyl-glucosaminyl-inositol) S-conjugate amidase, it recycles conjugated MSH to the N-acetyl cysteine conjugate (AcCys S-conjugate, a mercapturic acid) and the MSH precursor. Involved in MSH-dependent detoxification of a number of alkylating agents and antibiotics. The protein is Mycothiol S-conjugate amidase of Streptomyces coelicolor (strain ATCC BAA-471 / A3(2) / M145).